A 279-amino-acid polypeptide reads, in one-letter code: Shikimate dehydrogenase (NADP(+)) (279 aa).

Shikimate-binding positions include 21–23 (SRS) and T68. Catalysis depends on K72, which acts as the Proton acceptor. NADP(+) is bound at residue D83. Residues N92 and D107 each contribute to the shikimate site. Residues 132–136 (GAGGA), 156–161 (NRTVER), and L221 each bind NADP(+). Residue Y223 coordinates shikimate. G244 is a binding site for NADP(+).

It belongs to the shikimate dehydrogenase family. As to quaternary structure, homodimer.

The catalysed reaction is shikimate + NADP(+) = 3-dehydroshikimate + NADPH + H(+). It participates in metabolic intermediate biosynthesis; chorismate biosynthesis; chorismate from D-erythrose 4-phosphate and phosphoenolpyruvate: step 4/7. Functionally, involved in the biosynthesis of the chorismate, which leads to the biosynthesis of aromatic amino acids. Catalyzes the reversible NADPH linked reduction of 3-dehydroshikimate (DHSA) to yield shikimate (SA). The protein is Shikimate dehydrogenase (NADP(+)) of Nitrobacter winogradskyi (strain ATCC 25391 / DSM 10237 / CIP 104748 / NCIMB 11846 / Nb-255).